We begin with the raw amino-acid sequence, 258 residues long: Acetylglutamate kinase (258 aa).

Substrate is bound by residues 44 to 45 (GG), Arg66, and Asn158. Residues 181 to 186 (DVSGIL) and 209 to 211 (IIT) each bind ATP.

The protein belongs to the acetylglutamate kinase family. ArgB subfamily. As to quaternary structure, homodimer.

It localises to the cytoplasm. The catalysed reaction is N-acetyl-L-glutamate + ATP = N-acetyl-L-glutamyl 5-phosphate + ADP. It participates in amino-acid biosynthesis; L-arginine biosynthesis; N(2)-acetyl-L-ornithine from L-glutamate: step 2/4. Its function is as follows. Catalyzes the ATP-dependent phosphorylation of N-acetyl-L-glutamate. In Citrobacter koseri (strain ATCC BAA-895 / CDC 4225-83 / SGSC4696), this protein is Acetylglutamate kinase.